The following is a 236-amino-acid chain: Activating transcription factor of chaperone (236 aa).

Positions His117–Lys185 are disordered. Positions Ser120–Arg137 are enriched in low complexity. Residues Arg162–Asn175 are compositionally biased toward basic and acidic residues. The 64-residue stretch at Asp165–Leu228 folds into the bZIP domain. Positions Arg167 to Lys187 are basic motif. The interval Leu193–Leu228 is leucine-zipper.

This sequence belongs to the bZIP family. As to quaternary structure, binds DNA as a dimer.

The protein resides in the nucleus. Its function is as follows. Transcriptional activator that acts in the unfolded protein response (UPR) pathway. Acts during endoplasmic reticulum (ER) stress by activating UPR target genes via direct binding to the UPR element (UPRE) (5'-GGAACTGGACAGCGTGTCGAAA-3'). Activates expression of ER chaperones ERP72 and PDI. This chain is Activating transcription factor of chaperone, found in Bombyx mori (Silk moth).